The sequence spans 44 residues: Tachystatin-A1 (44 aa).

3 disulfides stabilise this stretch: C4–C24, C11–C29, and C23–C41.

As to expression, granular hemocytes, small secretory granules.

It is found in the secreted. Exhibits stronger antimicrobial activity against the Gram-positive bacteria (S.aureus (IC(50) is 4.2 ug/ml)) and fungi (C.albicans (IC(50) is 3.0 ug/ml) and P.pastoris (IC(50) is 0.5 ug/ml)) than Gram-negative bacteria (E.coli (IC(50) is 25 ug/ml)). Binds to chitin (8.4 uM are required to obtain 50% of binding). Does not cause hemolysis on sheep erythrocytes. Has no blocking activity on the P-type calcium channel. In Tachypleus tridentatus (Japanese horseshoe crab), this protein is Tachystatin-A1.